Here is a 307-residue protein sequence, read N- to C-terminus: 4-hydroxy-3-methylbut-2-enyl diphosphate reductase (307 aa).

Cysteine 12 contacts [4Fe-4S] cluster. 2 residues coordinate (2E)-4-hydroxy-3-methylbut-2-enyl diphosphate: histidine 41 and histidine 74. Dimethylallyl diphosphate-binding residues include histidine 41 and histidine 74. Isopentenyl diphosphate contacts are provided by histidine 41 and histidine 74. Cysteine 96 provides a ligand contact to [4Fe-4S] cluster. Histidine 124 contacts (2E)-4-hydroxy-3-methylbut-2-enyl diphosphate. Histidine 124 is a dimethylallyl diphosphate binding site. Residue histidine 124 coordinates isopentenyl diphosphate. Catalysis depends on glutamate 126, which acts as the Proton donor. Threonine 165 is a (2E)-4-hydroxy-3-methylbut-2-enyl diphosphate binding site. Cysteine 195 is a binding site for [4Fe-4S] cluster. Residues serine 223, serine 224, asparagine 225, and serine 267 each coordinate (2E)-4-hydroxy-3-methylbut-2-enyl diphosphate. 4 residues coordinate dimethylallyl diphosphate: serine 223, serine 224, asparagine 225, and serine 267. Residues serine 223, serine 224, asparagine 225, and serine 267 each contribute to the isopentenyl diphosphate site.

This sequence belongs to the IspH family. [4Fe-4S] cluster is required as a cofactor.

It carries out the reaction isopentenyl diphosphate + 2 oxidized [2Fe-2S]-[ferredoxin] + H2O = (2E)-4-hydroxy-3-methylbut-2-enyl diphosphate + 2 reduced [2Fe-2S]-[ferredoxin] + 2 H(+). The catalysed reaction is dimethylallyl diphosphate + 2 oxidized [2Fe-2S]-[ferredoxin] + H2O = (2E)-4-hydroxy-3-methylbut-2-enyl diphosphate + 2 reduced [2Fe-2S]-[ferredoxin] + 2 H(+). The protein operates within isoprenoid biosynthesis; dimethylallyl diphosphate biosynthesis; dimethylallyl diphosphate from (2E)-4-hydroxy-3-methylbutenyl diphosphate: step 1/1. It functions in the pathway isoprenoid biosynthesis; isopentenyl diphosphate biosynthesis via DXP pathway; isopentenyl diphosphate from 1-deoxy-D-xylulose 5-phosphate: step 6/6. Its function is as follows. Catalyzes the conversion of 1-hydroxy-2-methyl-2-(E)-butenyl 4-diphosphate (HMBPP) into a mixture of isopentenyl diphosphate (IPP) and dimethylallyl diphosphate (DMAPP). Acts in the terminal step of the DOXP/MEP pathway for isoprenoid precursor biosynthesis. In Magnetococcus marinus (strain ATCC BAA-1437 / JCM 17883 / MC-1), this protein is 4-hydroxy-3-methylbut-2-enyl diphosphate reductase.